The primary structure comprises 112 residues: Nitrogen regulatory protein P-II 1 (112 aa).

Tyrosine 51 carries the O-UMP-tyrosine modification.

The protein belongs to the P(II) protein family. As to quaternary structure, homotrimer. Uridylylated/deuridylylated by GlnD.

In terms of biological role, P-II indirectly controls the transcription of the glutamine synthetase gene (GlnA). P-II prevents NR-II-catalyzed conversion of NR-I to NR-I-phosphate, the transcriptional activator of GlnA. When P-II is uridylylated to P-II-UMP, these events are reversed. When the ratio of Gln to 2-ketoglutarate decreases, P-II is uridylylated to P-II-UMP, which causes the deadenylation of glutamine synthetase by GlnE, so activating the enzyme. The chain is Nitrogen regulatory protein P-II 1 (glnB) from Escherichia coli O157:H7.